A 210-amino-acid chain; its full sequence is Uracil phosphoribosyltransferase (210 aa).

5-phospho-alpha-D-ribose 1-diphosphate is bound by residues Arg-78, Arg-103, and 130-138; that span reads DPMLATGGS. Uracil-binding positions include Ile-193 and 198–200; that span reads GDA. Residue Asp-199 participates in 5-phospho-alpha-D-ribose 1-diphosphate binding.

Belongs to the UPRTase family. Mg(2+) is required as a cofactor.

It carries out the reaction UMP + diphosphate = 5-phospho-alpha-D-ribose 1-diphosphate + uracil. It participates in pyrimidine metabolism; UMP biosynthesis via salvage pathway; UMP from uracil: step 1/1. With respect to regulation, allosterically activated by GTP. In terms of biological role, catalyzes the conversion of uracil and 5-phospho-alpha-D-ribose 1-diphosphate (PRPP) to UMP and diphosphate. The chain is Uracil phosphoribosyltransferase from Laribacter hongkongensis (strain HLHK9).